A 46-amino-acid chain; its full sequence is Daisho2 (46 aa).

An N-terminal signal peptide occupies residues 1-22 (MNCLKICGFFFALIAALATAEA).

In terms of tissue distribution, hemolymph (at protein level).

It is found in the secreted. In terms of biological role, peptide which plays a role in the humoral immune response to a subset of filamentous fungi, including F.oxysporum and F.verticillioides. In Drosophila melanogaster (Fruit fly), this protein is Daisho2.